The chain runs to 35 residues: Photosystem II reaction center protein T (35 aa).

The chain crosses the membrane as a helical span at residues 3–23 (ALVYTFLLXSTLGIIFFAIFF).

Belongs to the PsbT family. PSII is composed of 1 copy each of membrane proteins PsbA, PsbB, PsbC, PsbD, PsbE, PsbF, PsbH, PsbI, PsbJ, PsbK, PsbL, PsbM, PsbT, PsbY, PsbZ, Psb30/Ycf12, at least 3 peripheral proteins of the oxygen-evolving complex and a large number of cofactors. It forms dimeric complexes.

The protein resides in the plastid. It localises to the chloroplast thylakoid membrane. Its function is as follows. Found at the monomer-monomer interface of the photosystem II (PS II) dimer, plays a role in assembly and dimerization of PSII. PSII is a light-driven water plastoquinone oxidoreductase, using light energy to abstract electrons from H(2)O, generating a proton gradient subsequently used for ATP formation. The chain is Photosystem II reaction center protein T from Cunninghamia lanceolata (China fir).